A 270-amino-acid polypeptide reads, in one-letter code: Ribosomal RNA small subunit methyltransferase A (270 aa).

S-adenosyl-L-methionine contacts are provided by Asn18, Leu20, Gly45, Glu66, Asp91, and Asn112.

It belongs to the class I-like SAM-binding methyltransferase superfamily. rRNA adenine N(6)-methyltransferase family. RsmA subfamily.

It localises to the cytoplasm. It carries out the reaction adenosine(1518)/adenosine(1519) in 16S rRNA + 4 S-adenosyl-L-methionine = N(6)-dimethyladenosine(1518)/N(6)-dimethyladenosine(1519) in 16S rRNA + 4 S-adenosyl-L-homocysteine + 4 H(+). Functionally, specifically dimethylates two adjacent adenosines (A1518 and A1519) in the loop of a conserved hairpin near the 3'-end of 16S rRNA in the 30S particle. May play a critical role in biogenesis of 30S subunits. The polypeptide is Ribosomal RNA small subunit methyltransferase A (Psychromonas ingrahamii (strain DSM 17664 / CCUG 51855 / 37)).